A 799-amino-acid chain; its full sequence is Histidine biosynthesis trifunctional protein (799 aa).

Residues 1-229 are phosphoribosyl-AMP cyclohydrolase; sequence MVLPILPLID…FIVEQENVGF (229 aa). Positions 230-312 are phosphoribosyl-ATP pyrophosphohydrolase; it reads CHLETMSCFG…FYFALAKLVT (83 aa). Positions 313 to 799 are histidinol dehydrogenase; the sequence is NNVSLKDVEN…KLGLIPKDFQ (487 aa). Zn(2+)-binding residues include Gln-618 and His-621. Catalysis depends on residues Glu-687 and His-688. Residues Asp-721 and His-780 each contribute to the Zn(2+) site.

The protein in the C-terminal section; belongs to the histidinol dehydrogenase family. Zn(2+) serves as cofactor.

It carries out the reaction 1-(5-phospho-beta-D-ribosyl)-5'-AMP + H2O = 1-(5-phospho-beta-D-ribosyl)-5-[(5-phospho-beta-D-ribosylamino)methylideneamino]imidazole-4-carboxamide. It catalyses the reaction 1-(5-phospho-beta-D-ribosyl)-ATP + H2O = 1-(5-phospho-beta-D-ribosyl)-5'-AMP + diphosphate + H(+). The catalysed reaction is L-histidinol + 2 NAD(+) + H2O = L-histidine + 2 NADH + 3 H(+). Its pathway is amino-acid biosynthesis; L-histidine biosynthesis; L-histidine from 5-phospho-alpha-D-ribose 1-diphosphate: step 2/9. It functions in the pathway amino-acid biosynthesis; L-histidine biosynthesis; L-histidine from 5-phospho-alpha-D-ribose 1-diphosphate: step 3/9. The protein operates within amino-acid biosynthesis; L-histidine biosynthesis; L-histidine from 5-phospho-alpha-D-ribose 1-diphosphate: step 9/9. This Saccharomyces bayanus (Yeast) protein is Histidine biosynthesis trifunctional protein (HIS4).